Here is a 198-residue protein sequence, read N- to C-terminus: Ribonuclease HII (198 aa).

In terms of domain architecture, RNase H type-2 spans 6–195; it reads RRVAGVDEVG…VHHMLYQDKN (190 aa). A divalent metal cation-binding residues include D12, E13, and D103.

It belongs to the RNase HII family. Mn(2+) serves as cofactor. It depends on Mg(2+) as a cofactor.

The protein resides in the cytoplasm. The catalysed reaction is Endonucleolytic cleavage to 5'-phosphomonoester.. Endonuclease that specifically degrades the RNA of RNA-DNA hybrids. The protein is Ribonuclease HII of Roseobacter denitrificans (strain ATCC 33942 / OCh 114) (Erythrobacter sp. (strain OCh 114)).